Reading from the N-terminus, the 189-residue chain is MLYLASRSLCRRQLLQRLDIPFQVIDLEIPEVRREDELPQDYVRRVAQEKAQVGLARVRDAFAPKVLGADTEVVLDGRVFGKPADLVEAAAMLAALSGRTHQVMTAVSLVAAGGVAAQVLVVSEVSFALLSQGQIARYVDSGEPMGKAGAYAIQGRGECFVSRLVGSYSGVMGLPLQQTAQLLTTFEES.

Residue Asp70 is the Proton acceptor of the active site.

This sequence belongs to the Maf family. A divalent metal cation is required as a cofactor.

The protein localises to the cytoplasm. The enzyme catalyses a ribonucleoside 5'-triphosphate + H2O = a ribonucleoside 5'-phosphate + diphosphate + H(+). The catalysed reaction is a 2'-deoxyribonucleoside 5'-triphosphate + H2O = a 2'-deoxyribonucleoside 5'-phosphate + diphosphate + H(+). Nucleoside triphosphate pyrophosphatase. May have a dual role in cell division arrest and in preventing the incorporation of modified nucleotides into cellular nucleic acids. This Xylella fastidiosa (strain 9a5c) protein is Nucleoside triphosphate pyrophosphatase.